A 908-amino-acid polypeptide reads, in one-letter code: SH3 and PX domain-containing protein 2B (908 aa).

The PX domain occupies 5–129; the sequence is RSIVEVKVLD…QFFETRPEDL (125 aa). A Phosphotyrosine modification is found at Tyr25. 2 consecutive SH3 domains span residues 152–211 and 221–280; these read MVLE…GQDG and EEEE…KNSG. A phosphoserine mark is found at Ser279 and Ser291. Disordered stretches follow at residues 280–300 and 315–366; these read GEPL…ALDL and ELLN…PPIP. The segment covering 315–337 has biased composition (basic and acidic residues); it reads ELLNNQRDGRFEGRLVPDGDVKQ. The segment covering 338 to 347 has biased composition (basic residues); that stretch reads RSPKMRQRPP. Positions 368 to 427 constitute an SH3 3 domain; that stretch reads QVEEEYYTIAEFQTTIPDGISFQAGLKVEVIEKSLSGWWYIQMEDKEGWAPATFIDKYKK. The segment at 455-832 is disordered; that stretch reads TENNTGPEAV…LGPRVTGKVG (378 aa). 5 stretches are compositionally biased toward basic and acidic residues: residues 486 to 499, 516 to 546, 569 to 584, 595 to 606, and 615 to 625; these read KDWK…RKAS, QEEK…KMEP, LARD…DKSK, CGHKVLAKEVKK, and SKAELSEEKVD. Ser499 and Ser528 each carry phosphoserine. Tyr661 carries the phosphotyrosine modification. Over residues 671-684 the composition is skewed to basic and acidic residues; sequence KSQEKALLDGESHH. Positions 754–764 are enriched in pro residues; the sequence is VVPPRRPPPPK. Phosphoserine is present on Ser840. An SH3 4 domain is found at 847–908; that stretch reads PKDSLYVAVA…IPSNYLRKKP (62 aa).

The protein belongs to the SH3PXD2 family. Interacts with NOXO1. Interacts (via SH3 domains) with NOXA1; the interaction is direct. Interacts with ADAM15. Interacts with FASLG. Phosphorylated in SRC-transformed cells. In terms of tissue distribution, highly expressed in the stromal-vascular fraction of white adipose tissue with moderate expression in heart, skeletal muscle and the mature adipocyte fraction of white adipose tissue. Also expressed in brain, spleen, kidney and liver. Expressed in white and brown adipose tissues, eye, lung, heart, brain, spleen, stomach, liver and skeletal muscle (at protein level). Not expressed in kidney or bone marrow.

It is found in the cytoplasm. Its subcellular location is the cell projection. It localises to the podosome. In terms of biological role, adapter protein involved in invadopodia and podosome formation and extracellular matrix degradation. Binds matrix metalloproteinases (ADAMs), NADPH oxidases (NOXs) and phosphoinositides. Acts as an organizer protein that allows NOX1- or NOX3-dependent reactive oxygen species (ROS) generation and ROS localization. Plays a role in mitotic clonal expansion during the immediate early stage of adipocyte differentiation. The sequence is that of SH3 and PX domain-containing protein 2B (Sh3pxd2b) from Mus musculus (Mouse).